A 427-amino-acid polypeptide reads, in one-letter code: Glutamate-1-semialdehyde 2,1-aminomutase (427 aa).

Lysine 265 bears the N6-(pyridoxal phosphate)lysine mark.

Belongs to the class-III pyridoxal-phosphate-dependent aminotransferase family. HemL subfamily. As to quaternary structure, homodimer. Requires pyridoxal 5'-phosphate as cofactor.

The protein resides in the cytoplasm. It carries out the reaction (S)-4-amino-5-oxopentanoate = 5-aminolevulinate. It participates in porphyrin-containing compound metabolism; protoporphyrin-IX biosynthesis; 5-aminolevulinate from L-glutamyl-tRNA(Glu): step 2/2. The polypeptide is Glutamate-1-semialdehyde 2,1-aminomutase (Neisseria meningitidis serogroup A / serotype 4A (strain DSM 15465 / Z2491)).